The following is a 567-amino-acid chain: Urease subunit alpha (567 aa).

Residues 129–567 (GGIDAHIHFI…LPLAQLYCLF (439 aa)) enclose the Urease domain. His134, His136, and Lys217 together coordinate Ni(2+). Lys217 is modified (N6-carboxylysine). His219 is a substrate binding site. Ni(2+) is bound by residues His246 and His272. The Proton donor role is filled by His320. Position 360 (Asp360) interacts with Ni(2+).

It belongs to the metallo-dependent hydrolases superfamily. Urease alpha subunit family. In terms of assembly, heterotrimer of UreA (gamma), UreB (beta) and UreC (alpha) subunits. Three heterotrimers associate to form the active enzyme. The cofactor is Ni cation. In terms of processing, carboxylation allows a single lysine to coordinate two nickel ions.

The protein resides in the cytoplasm. The catalysed reaction is urea + 2 H2O + H(+) = hydrogencarbonate + 2 NH4(+). It participates in nitrogen metabolism; urea degradation; CO(2) and NH(3) from urea (urease route): step 1/1. This is Urease subunit alpha from Alteromonas mediterranea (strain DSM 17117 / CIP 110805 / LMG 28347 / Deep ecotype).